Reading from the N-terminus, the 740-residue chain is MTVKLDFEECLKDSPRFRASIELVETEVSELETRLEKLLKLGSCLLESGQHYLAAGRAFVVGICDLARLGPPEPMMAECLEKFTVSLNHKLDSHAELLDATQHTLQQQIQTLVKEGLRGFREARRDFWRGAENLEAALTHNAEVPRRRVQEAEEAGTALRTARAGYRSRALDYALQVNVIEDKRKFDIMEFVLRLVEAQATYFQQGHEELNRLAQYRKELGTQLHNLVLNSARQKRDMEQRHVLLKQKELGGEEPEPSLKEGPSGLVMEGHLFKRASNAFKTWSRRWFTIQNNQLVYQKKYKDPVTVVVDDLRLCTVKLCPDSERRFCFEVVSTSKSCFLQADSERLLQLWVSAVQSSIASAFSQAHLENSPRGPGQVSGYHAPGSAATLACGGAARGRESGGVGQVAAQVQSVDGNAQCCDCREPAPEWASINLGVTLCIQCSGIHRSLGVHFSKVRSLTLDSWEPELVKLMCELGNVIINQIYEARVEAMAVKKPGPSCSRQEKEAWIHAKYVEKKFLTKLPEIRGRRGGRGPPRGHPPVPPKPPIRPHSGIVRSKSECPSDDMGSLHPGALLFQAAGHPPSLPTMADALAHGADVNWVNVGQGNATPLIRATAANSLLACEFLLQNGANVNQADSAGRGPLHHATILGHTGLACLFLKRGADLGARDTEGRDPLTIAMETTNADIVTLLRLAKMREAEAAQGQAGDETYLDIFRDFSLMASDDPEKLSRRSHDLHTL.

Residues 1-226 (MTVKLDFEEC…RKELGTQLHN (226 aa)) enclose the BAR domain. A required for formation of endosomal tubules when overexpressed with PIP5K1C region spans residues 1–382 (MTVKLDFEEC…RGPGQVSGYH (382 aa)). One can recognise a PH domain in the interval 265–360 (GLVMEGHLFK…WVSAVQSSIA (96 aa)). The Arf-GAP domain maps to 405–527 (GQVAAQVQSV…KFLTKLPEIR (123 aa)). Residues 405-740 (GQVAAQVQSV…SRRSHDLHTL (336 aa)) form a required for interaction with GULP1 region. Residues 420-443 (CCDCREPAPEWASINLGVTLCIQC) form a C4-type zinc finger. Position 485 is a 3'-nitrotyrosine (Tyr485). Residues 525-562 (EIRGRRGGRGPPRGHPPVPPKPPIRPHSGIVRSKSECP) are disordered. The tract at residues 525–566 (EIRGRRGGRGPPRGHPPVPPKPPIRPHSGIVRSKSECPSDDM) is prevents interaction with ITGB1 when S-554 is not phosphorylated. Pro residues predominate over residues 537 to 549 (RGHPPVPPKPPIR). ANK repeat units follow at residues 606–635 (GNAT…NVNQ), 639–668 (AGRG…DLGA), and 672–702 (EGRD…EAEA).

Banana-shaped homodimer laterally assembling into tetramers, the tetramers further pack helically onto the membrane. Interacts with GTP-bound ARF6. Interacts with third cytoplasmic loop of SLC2A4/GLUT4. Interacts with CLTC. Interacts with GULP1. Forms a complex with GDP-bound ARF6 and GULP1. Interacts with ITGB1; required for ITGB1 recycling.

The protein localises to the recycling endosome membrane. With respect to regulation, GAP activity stimulated by phosphatidylinositol 4,5-bisphosphate (PIP2) and phosphatidic acid. Functionally, GTPase-activating protein (GAP) for ADP ribosylation factor 6 (ARF6) required for clathrin-dependent export of proteins from recycling endosomes to trans-Golgi network and cell surface. Required for regulated export of ITGB1 from recycling endosomes to the cell surface and ITGB1-dependent cell migration. In Mus musculus (Mouse), this protein is Arf-GAP with coiled-coil, ANK repeat and PH domain-containing protein 1 (Acap1).